The chain runs to 321 residues: MIDFRPFYQQIATTNLSDWLETLPCQLKEWETQTHGDYAKWSKIVDFLPNLHADEIDLKSAVKSDRTSPLSEGEKQRIIHHLKQLMPWRKGPYHLFGIHVDCEWRSDFKWDRVLPHLSPLQGRTILDVGCGSGYHMWRMVGEGAKMVVGIDPTELFLCQFEAVRKLLNNDRRANLIPLGIEQMQPLAAFDTVFSMGVLYHRKSPLDHLSQLKNQLVKGGELVLETLVVDGDINTVLVPADRYAKMKNVYFIPSVATLINWLEKVGFTNVRCVDVATTTLEEQRKTDWLENESLIDFLDPNDHSKTIEGYQAPKRAVILANK.

Carboxy-S-adenosyl-L-methionine contacts are provided by residues K90, W104, K109, G129, 151 to 153 (DPT), 180 to 181 (IE), M195, Y199, and R314.

This sequence belongs to the class I-like SAM-binding methyltransferase superfamily. CmoB family. In terms of assembly, homotetramer.

It carries out the reaction carboxy-S-adenosyl-L-methionine + 5-hydroxyuridine(34) in tRNA = 5-carboxymethoxyuridine(34) in tRNA + S-adenosyl-L-homocysteine + H(+). Catalyzes carboxymethyl transfer from carboxy-S-adenosyl-L-methionine (Cx-SAM) to 5-hydroxyuridine (ho5U) to form 5-carboxymethoxyuridine (cmo5U) at position 34 in tRNAs. This is tRNA U34 carboxymethyltransferase from Haemophilus influenzae (strain ATCC 51907 / DSM 11121 / KW20 / Rd).